Here is a 618-residue protein sequence, read N- to C-terminus: DELLA protein SLN1 (618 aa).

Residues 1–36 are disordered; sequence MKREYQDGGGSGGGGDEMGSSRDKMMVSSSEAGEGE. Positions 7–17 are enriched in gly residues; the sequence is DGGGSGGGGDE. Residues 39–43 carry the DELLA motif motif; sequence DELLA. 2 disordered regions span residues 106-137 and 159-197; these read LNAP…YFDL and APAD…GAAR. Residues 108-118 are compositionally biased toward pro residues; the sequence is APPPPLPPAPP. 2 stretches are compositionally biased toward low complexity: residues 119–128 and 176–197; these read QLNASTSSTV and TGGS…GAAR. In terms of domain architecture, GRAS spans 221-614; the sequence is VDTQEAGIRL…RPLIATSAWR (394 aa). Positions 228-284 are leucine repeat I (LRI); it reads IRLVHALLACAEAVQQENLSAAEALVKQIPLLAASQGGAMRKVAAYFGEALARRVFR. The LxCxE motif signature appears at 235–239; the sequence is LACAE. The tract at residues 303–368 is VHIID; that stretch reads HAHFYESCPY…GGPPSFRLTG (66 aa). A VHIID motif is present at residues 334-338; that stretch reads VHVVD. The tract at residues 382-421 is leucine repeat II (LRII); that stretch reads QVGWKLAQFAHTIRVDFQYRGLVAATLADLEPFMLQPEGE. A PFYRE region spans residues 431–535; the sequence is IAVNSVFEMH…EVYLGRQICN (105 aa). Positions 538–614 are SAW; sequence ACEGTERTER…RPLIATSAWR (77 aa).

It belongs to the GRAS family. DELLA subfamily. Post-translationally, phosphorylated. Ubiquitinated. Upon GA application it is ubiquitinated, leading to its subsequent degradation. In terms of tissue distribution, apparently restricted to regions where growth is occurring in the leaf blade. Localizes almost exclusively to the basal elongation zone (EZ) for the elongating blades of L1, L2 and L3. More detailed fractionation of the L3 blade shows that in cv. Himalaya, it is preferentially localized to the basal third of the EZ, but its presence can still be detected toward the end of the EZ (at protein level).

It is found in the nucleus. Probable transcriptional regulator that acts as a repressor of the gibberellin (GA) signaling pathway. Probably acts by participating in large multiprotein complexes that repress transcription of GA-inducible genes. Upon GA application, it is degraded by the proteasome, allowing the GA signaling pathway. Acts as a negative regulator of GAMYB gene expression. In Hordeum vulgare (Barley), this protein is DELLA protein SLN1 (SLN1).